Consider the following 311-residue polypeptide: Pyrimidine-specific ribonucleoside hydrolase RihA (311 aa).

His-240 is an active-site residue.

Belongs to the IUNH family. RihA subfamily.

Hydrolyzes with equal efficiency cytidine or uridine to ribose and cytosine or uracil, respectively. This is Pyrimidine-specific ribonucleoside hydrolase RihA from Escherichia fergusonii (strain ATCC 35469 / DSM 13698 / CCUG 18766 / IAM 14443 / JCM 21226 / LMG 7866 / NBRC 102419 / NCTC 12128 / CDC 0568-73).